We begin with the raw amino-acid sequence, 483 residues long: FAD-linked oxidoreductase pgmH (483 aa).

One can recognise an FAD-binding PCMH-type domain in the interval 54–215 (SIRLATLVVY…TEFKYRVHKQ (162 aa)).

Belongs to the oxygen-dependent FAD-linked oxidoreductase family. The cofactor is FAD.

The protein operates within pigment biosynthesis. Its pathway is secondary metabolite biosynthesis. In terms of biological role, FAD-linked oxidoreductase; part of the gene cluster that mediates the biosynthesis of pleosporalin A, ascomycone A, as well as a third cryptic naphthoquinone derived pigment, all responsible for the coloration of conidia. Essential for the production of pleosporalin A, but not the 2 other final products. The pathway begins with the biosynthesis of the cyclized heptaketide 3-acetonyl-1,6,8-trihydroxy-2-naphthaldehyde by the NR-PKS pgmA. The C-6 hydroxyl group is further methylated by the O-methyltransferase pgmB to yield fusarubinaldehyde which is in turn oxidized by the cytochrome P450 monooxygenase pgmC at C-9. The C-1 hydroxyl group is then methylated spontaneously. Although pgmE, pgmD and pgmH are essential for the production of pleosporalin A, it is not the case for the 2 other final products and it remains difficult to assign a specific function to each enzyme. PgmF and pgmG seem not to be involved in pigment biosynthesis although they were regulated by the cluster-specific transcription factor pgmR. The chain is FAD-linked oxidoreductase pgmH from Aspergillus terreus (strain NIH 2624 / FGSC A1156).